The primary structure comprises 53 residues: Metallocarboxypeptidase inhibitor b (53 aa).

Intrachain disulfides connect Cys9/Cys23, Cys15/Cys51, and Cys27/Cys38. Ala53 is a binding site for Zn(2+).

Metallocarboxypeptidase inhibitor. Has an inhibitory effect on bovine CPA1 and porcine CPB1. Does not inhibit D.melanogaster svr (carboxypeptidase D). Shows no activity against serine proteases subtilisin or bovine trypsin, cysteine protease papain, and aspartyl protease porcine pepsin. The chain is Metallocarboxypeptidase inhibitor b from Nerita versicolor (Four-tooth nerite).